Here is a 337-residue protein sequence, read N- to C-terminus: MLDAFDRYPLTFGPTPIEKLERLTDHLGGKVQLYAKREDCNSGLAFGGNKLRKLEYIIPDAIASGADTLVSIGGVQSNHTRMVAAVAAKIGFKCRLVQEAWVPHEDAVYDRVGNIMLSRIMGADVRLVDDGFDIGIRRSWEEAIEEVKAAGGKPYAIPAGASVHKYGGLGYVGFAEEVRAQEAALGFAFDYIVVCTVTGSSHAGMAVGFAKDGRADHVIGIDASFTPDQTRAQVLEIAQRTADLVKLGREMRPEDIVLVEDYAYPVYGVPSEETKDAIRLVGRLEGMITDPVYEGKSMQGMIDLVKKGYFPEGSKVLYAHLGGAPALNGYGYAFRNG.

Position 50 is an N6-(pyridoxal phosphate)lysine (K50). S77 serves as the catalytic Nucleophile.

The protein belongs to the ACC deaminase/D-cysteine desulfhydrase family. In terms of assembly, homotrimer. It depends on pyridoxal 5'-phosphate as a cofactor.

The catalysed reaction is 1-aminocyclopropane-1-carboxylate + H2O = 2-oxobutanoate + NH4(+). Catalyzes a cyclopropane ring-opening reaction, the irreversible conversion of 1-aminocyclopropane-1-carboxylate (ACC) to ammonia and alpha-ketobutyrate. Allows growth on ACC as a nitrogen source. The polypeptide is 1-aminocyclopropane-1-carboxylate deaminase (Allorhizobium ampelinum (strain ATCC BAA-846 / DSM 112012 / S4) (Agrobacterium vitis (strain S4))).